The primary structure comprises 215 residues: Orotate phosphoribosyltransferase (215 aa).

Lys-26 contributes to the 5-phospho-alpha-D-ribose 1-diphosphate binding site. Residue Phe-34–Phe-35 coordinates orotate. 5-phospho-alpha-D-ribose 1-diphosphate-binding positions include Tyr-72–Lys-73, Arg-99, Lys-100, Lys-103, His-105, and Asp-124–Ala-132. Orotate is bound by residues Thr-128 and Arg-156.

It belongs to the purine/pyrimidine phosphoribosyltransferase family. PyrE subfamily. In terms of assembly, homodimer. Requires Mg(2+) as cofactor.

It carries out the reaction orotidine 5'-phosphate + diphosphate = orotate + 5-phospho-alpha-D-ribose 1-diphosphate. The protein operates within pyrimidine metabolism; UMP biosynthesis via de novo pathway; UMP from orotate: step 1/2. In terms of biological role, catalyzes the transfer of a ribosyl phosphate group from 5-phosphoribose 1-diphosphate to orotate, leading to the formation of orotidine monophosphate (OMP). The polypeptide is Orotate phosphoribosyltransferase (Stutzerimonas stutzeri (strain A1501) (Pseudomonas stutzeri)).